Here is a 152-residue protein sequence, read N- to C-terminus: Ribonuclease pancreatic beta-type (152 aa).

An N-terminal signal peptide occupies residues 1-25 (MGLEKSFILFSLLVLVLGWVQPSLG). The span at 31–45 (SSADKFKRQHMDPES) shows a compositional bias: basic and acidic residues. The disordered stretch occupies residues 31–53 (SSADKFKRQHMDPESPSKSSPTY). 2 residues coordinate substrate: K35 and R38. The Proton acceptor role is filled by H40. 4 disulfide bridges follow: C54/C112, C68/C123, C86/C138, and C93/C100. Substrate contacts are provided by residues 69–73 (KPVNT), K94, and R113. H147 (proton donor) is an active-site residue.

This sequence belongs to the pancreatic ribonuclease family. In terms of assembly, monomer.

The protein resides in the secreted. The enzyme catalyses an [RNA] containing cytidine + H2O = an [RNA]-3'-cytidine-3'-phosphate + a 5'-hydroxy-ribonucleotide-3'-[RNA].. The catalysed reaction is an [RNA] containing uridine + H2O = an [RNA]-3'-uridine-3'-phosphate + a 5'-hydroxy-ribonucleotide-3'-[RNA].. Its function is as follows. Endonuclease that catalyzes the cleavage of RNA on the 3' side of pyrimidine nucleotides. Acts on single-stranded and double-stranded RNA. This Rattus exulans (Polynesian rat) protein is Ribonuclease pancreatic beta-type.